A 179-amino-acid polypeptide reads, in one-letter code: MTSRLQVIQGDITQLSVDAIVNAANASLMGGGGVDGAIHRAAGPALLDACKLIRQQQGECQTGHAVITPAGKLSAKAVIHTVGPVWRGGEHQEAELLEEAYRNCLLLAEANHFRSIAFPAISTGVYGYPRAQAAEVAVRTVSDFITRYALPEQVYFVCYDEETARLYARLLTQQGDDPA.

Positions 1–175 (MTSRLQVIQG…LYARLLTQQG (175 aa)) constitute a Macro domain. Residues 11 to 12 (DI), N25, 33 to 35 (GVD), and 122 to 126 (STGVY) each bind substrate. Residue D35 is the Proton acceptor of the active site.

This sequence belongs to the MacroD-type family. YmdB subfamily. In terms of assembly, homodimer. Interacts with RNase III.

It carries out the reaction 3''-O-acetyl-ADP-D-ribose + H2O = ADP-D-ribose + acetate + H(+). The catalysed reaction is 2''-O-acetyl-ADP-D-ribose + H2O = ADP-D-ribose + acetate + H(+). In terms of biological role, deacetylates O-acetyl-ADP ribose to yield ADP-ribose and free acetate. Down-regulates ribonuclease 3 (RNase III) activity. Acts by interacting directly with the region of the ribonuclease that is required for dimerization/activation. The sequence is that of O-acetyl-ADP-ribose deacetylase from Salmonella typhi.